A 199-amino-acid polypeptide reads, in one-letter code: MMQDVSSSPVSPADDSLSNSEEEPDRQQPPSGKRGGRKRRSSRRSAGGGAGPGGAAGGGVGGGDEPGSPAQGKRGKKSAGCGGGAGGGGSSSGGGSPQSYEELQTQRVMANVRERQRTQSLNEAFAALRKIIPTLPSDKLSKIQTLKLAARYIDFLYQVLQSDELDSKMASCSYVAHERLSYAFSVWRMEGAWSMSASH.

Over residues M1–S18 the composition is skewed to low complexity. The interval M1–E102 is disordered. A compositionally biased stretch (basic residues) spans R34–R43. 2 stretches are compositionally biased toward gly residues: residues A46–E65 and G80–S96. In terms of domain architecture, bHLH spans T105 to L156. The interval Q158 to R188 is sufficient for transactivation activity.

Efficient DNA binding requires dimerization with another bHLH protein. Homodimer or heterodimer with E proteins such as TCF3. ID1 binds preferentially to TCF3 but does not interact efficiently with TWIST1 so ID1 levels control the amount of TCF3 available to dimerize with TWIST and thus determine the type of dimer formed.

The protein resides in the nucleus. Functionally, acts as a transcriptional regulator. Inhibits myogenesis by sequestrating E proteins, inhibiting trans-activation by MEF2, and inhibiting DNA-binding by MYOD1 through physical interaction. This interaction probably involves the basic domains of both proteins. Also represses expression of pro-inflammatory cytokines such as TNFA and IL1B. Regulates cranial suture patterning and fusion. Activates transcription as a heterodimer with E proteins. Regulates gene expression differentially, depending on dimer composition. Homodimers induce expression of FGFR2 and POSTN while heterodimers repress FGFR2 and POSTN expression and induce THBS1 expression. Heterodimerization is also required for osteoblast differentiation. Represses the activity of the circadian transcriptional activator: NPAS2-BMAL1 heterodimer. The protein is Twist-related protein 1 (TWIST1) of Microcebus murinus (Gray mouse lemur).